An 85-amino-acid chain; its full sequence is uncharacterized protein (85 aa).

The interval 1 to 85 (MRWRPSSWSA…DQEQCGQHCR (85 aa)) is disordered. A compositionally biased stretch (basic and acidic residues) spans 47–61 (ASVEGEGGRHADRHG).

This is an uncharacterized protein from Streptomyces lividans.